Consider the following 443-residue polypeptide: D(2) dopamine receptor (443 aa).

Over Met-1–Tyr-37 the chain is Extracellular. Asn-5, Asn-17, and Asn-23 each carry an N-linked (GlcNAc...) asparagine glycan. Residues Ala-38–Ser-60 traverse the membrane as a helical segment. At Arg-61–Asn-70 the chain is on the cytoplasmic side. A helical transmembrane segment spans residues Tyr-71 to Tyr-93. At Leu-94 to Asp-108 the chain is on the extracellular side. Cysteines 107 and 182 form a disulfide. The helical transmembrane segment at Ile-109–Ile-130 threads the bilayer. At Asp-131–Arg-151 the chain is on the cytoplasmic side. The helical transmembrane segment at Val-152 to Phe-172 threads the bilayer. The Extracellular portion of the chain corresponds to Gly-173–Ala-188. A helical membrane pass occupies residues Phe-189–Tyr-213. The tract at residues Lys-211–Gln-373 is interaction with PPP1R9B. Topologically, residues Ile-214 to Gln-373 are cytoplasmic. The segment at Met-281–Lys-332 is disordered. The helical transmembrane segment at Met-374–Leu-395 threads the bilayer. Topologically, residues Asn-396–Ser-409 are extracellular. An intrachain disulfide couples Cys-399 to Cys-401. Residues Ala-410–Ile-431 form a helical membrane-spanning segment. Residues Glu-432–Cys-443 lie on the Cytoplasmic side of the membrane. Cys-443 carries S-palmitoyl cysteine lipidation.

Belongs to the G-protein coupled receptor 1 family. As to quaternary structure, forms homo- and heterooligomers with DRD4. The interaction with DRD4 may modulate agonist-induced downstream signaling. Interacts with CADPS and CADPS2. Interacts with GPRASP1, PPP1R9B and CLIC6. Interacts with ARRB2. Interacts with HTR2A. Interacts with DRD1. Interacts with KCNA2. Post-translationally, palmitoylated. Palmitoylation which is required for proper localization to the plasma membrane and stability of the receptor could be carried on by ZDHHC4, ZDHHC3 and ZDHHC8.

The protein localises to the cell membrane. It localises to the golgi apparatus membrane. Functionally, dopamine receptor whose activity is mediated by G proteins which inhibit adenylyl cyclase. Positively regulates postnatal regression of retinal hyaloid vessels via suppression of VEGFR2/KDR activity, downstream of OPN5. The polypeptide is D(2) dopamine receptor (DRD2) (Chlorocebus aethiops (Green monkey)).